We begin with the raw amino-acid sequence, 223 residues long: Deoxyribose-phosphate aldolase (223 aa).

Asp-89 serves as the catalytic Proton donor/acceptor. Lys-152 (schiff-base intermediate with acetaldehyde) is an active-site residue. Lys-181 serves as the catalytic Proton donor/acceptor.

This sequence belongs to the DeoC/FbaB aldolase family. DeoC type 1 subfamily.

Its subcellular location is the cytoplasm. The catalysed reaction is 2-deoxy-D-ribose 5-phosphate = D-glyceraldehyde 3-phosphate + acetaldehyde. Its pathway is carbohydrate degradation; 2-deoxy-D-ribose 1-phosphate degradation; D-glyceraldehyde 3-phosphate and acetaldehyde from 2-deoxy-alpha-D-ribose 1-phosphate: step 2/2. In terms of biological role, catalyzes a reversible aldol reaction between acetaldehyde and D-glyceraldehyde 3-phosphate to generate 2-deoxy-D-ribose 5-phosphate. This is Deoxyribose-phosphate aldolase from Bacillus cytotoxicus (strain DSM 22905 / CIP 110041 / 391-98 / NVH 391-98).